The chain runs to 259 residues: Tonin (259 aa).

The signal sequence occupies residues 1–18 (MWLQILSLVLSVGRIDAA). A propeptide spans 19–24 (PPGQSR) (activation peptide). A Peptidase S1 domain is found at 25–256 (IVGGYKCEKN…FTSWIKKVMK (232 aa)). 5 disulfide bridges follow: cysteine 31-cysteine 171, cysteine 48-cysteine 64, cysteine 150-cysteine 217, cysteine 182-cysteine 196, and cysteine 207-cysteine 232. Histidine 63 (charge relay system) is an active-site residue. Histidine 63 is a Zn(2+) binding site. An N-linked (GlcNAc...) asparagine glycan is attached at asparagine 106. The Zn(2+) site is built by histidine 113 and histidine 115. Residue aspartate 118 is the Charge relay system of the active site. The N-linked (GlcNAc...) asparagine glycan is linked to asparagine 189. Residue serine 211 is the Charge relay system of the active site.

It belongs to the peptidase S1 family. Kallikrein subfamily. In terms of assembly, monomer. Zn(2+) is required as a cofactor. In terms of tissue distribution, found in submaxillary gland.

The enzyme catalyses Preferential cleavage of Arg-|-Xaa bonds in small molecule substrates. Highly selective action to release kallidin (lysyl-bradykinin) from kininogen involves hydrolysis of Met-|-Xaa or Leu-|-Xaa.. This protein has both trypsin- and chymotrypsin-like activities, being able to release angiotensin II from angiotensin I or angiotensinogen. The polypeptide is Tonin (Klk2) (Rattus norvegicus (Rat)).